The following is a 358-amino-acid chain: Peptide chain release factor 1 (358 aa).

The residue at position 233 (Gln233) is an N5-methylglutamine.

It belongs to the prokaryotic/mitochondrial release factor family. Methylated by PrmC. Methylation increases the termination efficiency of RF1.

Its subcellular location is the cytoplasm. In terms of biological role, peptide chain release factor 1 directs the termination of translation in response to the peptide chain termination codons UAG and UAA. The polypeptide is Peptide chain release factor 1 (Geobacillus sp. (strain WCH70)).